Consider the following 493-residue polypeptide: MVKSCQKKPDIDEFFSFLQSAFHPLQTEELDTFVRNIFEYDDRGRLYNCLLTLVPYERLPIDAEDLSSRKTYARPVLIRQYRSLRFANKEENICRLTPNSAFVPVRDSAVASISTSKVQDFNSYATLTEAQKKTATPVEEKNFLNQIVIQCLDSLETDVETNTTHATLLAVDPTWLIRVSQHTCDRKAVANLCIQYGSQIFYDPSFRNAYELWSNPSVLLAFLKAQRVLVVSDIFTSSTLRSTQGTPMSFPNLALESADNVENVSKPINPRMERFSSEVKSSSILKQQIAAVVEKINYDIRPQRDQIPEENIVPRISYLTSTTTSTKSSPVPESTTTNTTEVLKELNDIQENKSRKNVEKATAATEEMLRGHHKPVEGTTATSEKESIKEEVDLEVNGDGKVEAEERIELESSDSEKELSELIDFLKREHPPEDTPEKRVKIKRIRTLLDTWQQEWRILNKAISNAESNSGRGQNSKTKTTSVNLSRNKRTRT.

Ser328 is modified (phosphoserine). Residues 466 to 486 show a composition bias toward polar residues; it reads AESNSGRGQNSKTKTTSVNLS. The tract at residues 466-493 is disordered; sequence AESNSGRGQNSKTKTTSVNLSRNKRTRT.

This is an uncharacterized protein from Schizosaccharomyces pombe (strain 972 / ATCC 24843) (Fission yeast).